The sequence spans 399 residues: Fructose-bisphosphate aldolase 1, chloroplastic (399 aa).

A chloroplast-targeting transit peptide spans methionine 1–alanine 48. Arginine 96 serves as a coordination point for substrate. Serine 158 carries the phosphoserine modification. Lysine 186 provides a ligand contact to substrate. At serine 216 the chain carries Phosphoserine. Catalysis depends on glutamate 226, which acts as the Proton acceptor. Lysine 268 (schiff-base intermediate with dihydroxyacetone-P) is an active-site residue. Residue serine 310–glycine 312 coordinates substrate. Lysine 395 is modified (N6,N6,N6-trimethyllysine).

It belongs to the class I fructose-bisphosphate aldolase family. As to quaternary structure, homotetramer. Can be trimethylated at Lys-395 by LSMT-L, but the trimethylation has no effect in vitro on the kinetic properties of the enzyme. Post-translationally, S-glutathionylated. In terms of tissue distribution, highly expressed in rosettes leaves and cauline leaves.

It is found in the plastid. The protein localises to the chloroplast. It localises to the plastoglobule. The protein resides in the chloroplast stroma. The enzyme catalyses beta-D-fructose 1,6-bisphosphate = D-glyceraldehyde 3-phosphate + dihydroxyacetone phosphate. The protein operates within carbohydrate degradation; glycolysis; D-glyceraldehyde 3-phosphate and glycerone phosphate from D-glucose: step 4/4. Its function is as follows. Plays a key role in glycolysis and gluconeogenesis. The chain is Fructose-bisphosphate aldolase 1, chloroplastic from Arabidopsis thaliana (Mouse-ear cress).